The following is a 180-amino-acid chain: CASP-like protein 2D1 (180 aa).

Topologically, residues 1–7 are cytoplasmic; sequence MAASGLK. Residues 8–28 traverse the membrane as a helical segment; it reads VPEMALRVCVVPLALASLWEM. Residues 29–48 lie on the Extracellular side of the membrane; sequence ATNAQADDTYGEVKFSDLSG. A helical transmembrane segment spans residues 49–69; sequence FSYLVGVNAVTAAYALVSILL. The Cytoplasmic portion of the chain corresponds to 70 to 79; the sequence is SSLKPLARYD. Residues 80 to 100 form a helical membrane-spanning segment; it reads WVILVMDQASAYLLVTSASAA. The Extracellular portion of the chain corresponds to 101–129; sequence AELLQLARRGDREVSWGEVCSYFGRFCGK. Residues 130 to 150 form a helical membrane-spanning segment; the sequence is ATVSLALHAAALACFVALALV. Residues 151-180 lie on the Cytoplasmic side of the membrane; it reads SAFRVLSTTGSSCHPPKHAQAQEHEQGRYN. Positions 161–180 are disordered; that stretch reads SSCHPPKHAQAQEHEQGRYN. The segment covering 170–180 has biased composition (basic and acidic residues); sequence QAQEHEQGRYN.

The protein belongs to the Casparian strip membrane proteins (CASP) family. Homodimer and heterodimers.

The protein localises to the cell membrane. This Sorghum bicolor (Sorghum) protein is CASP-like protein 2D1.